The following is a 504-amino-acid chain: Galactokinase (504 aa).

Arg47, Asp53, His54, and Asp56 together coordinate alpha-D-galactose. Residues Gly150, Gly152, Ser154, and Ser155 each contribute to the ATP site. Asn196 and Asp200 together coordinate alpha-D-galactose. Residue Asp200 is the Proton acceptor of the active site. Residues Ser244, Asn245, and Lys246 each contribute to the ATP site. Tyr254 is a binding site for alpha-D-galactose.

Belongs to the GHMP kinase family. GalK subfamily.

It catalyses the reaction alpha-D-galactose + ATP = alpha-D-galactose 1-phosphate + ADP + H(+). Its pathway is carbohydrate metabolism; galactose metabolism. Galactokinase is a key enzyme in the galactose metabolism where it catalyzes the conversion of alpha-D-galactose to galactose 1-phosphate. Can also induce the transcription of the gal genes in response to the organism being challenged with galactose as the sole source of carbon. The sequence is that of Galactokinase from Candida parapsilosis (Yeast).